Consider the following 150-residue polypeptide: Ribonuclease K6 (150 aa).

The first 23 residues, 1–23, serve as a signal peptide directing secretion; that stretch reads MVLCFPLLLLLLVLWGPVCPLHA. Residue His-38 is the Proton acceptor of the active site. 4 disulfides stabilise this stretch: Cys-46–Cys-104, Cys-60–Cys-114, Cys-78–Cys-129, and Cys-85–Cys-92. The N-linked (GlcNAc...) asparagine glycan is linked to Asn-55. Substrate-binding positions include 61-65 and Lys-86; that span reads KHQNT. Asn-100 carries N-linked (GlcNAc...) asparagine glycosylation. Substrate is bound at residue Arg-105. The active-site Proton donor is the His-145.

Belongs to the pancreatic ribonuclease family. As to quaternary structure, interacts (via N-terminus) with bacterial lipopolysaccharide (LPS).

It is found in the secreted. Its subcellular location is the lysosome. The protein resides in the cytoplasmic granule. In terms of biological role, ribonuclease which shows a preference for the pyrimidines uridine and cytosine. Has potent antibacterial activity against a range of Gram-positive and Gram-negative bacteria, including P.aeruginosa, A.baumanii, M.luteus, S.aureus, E.faecalis, E.faecium, S.saprophyticus and E.coli. Causes loss of bacterial membrane integrity, and also promotes agglutination of Gram-negative bacteria. Probably contributes to urinary tract sterility. Bactericidal activity is independent of RNase activity. This chain is Ribonuclease K6 (RNASE6), found in Pongo pygmaeus (Bornean orangutan).